We begin with the raw amino-acid sequence, 574 residues long: Adenine deaminase (574 aa).

The protein belongs to the metallo-dependent hydrolases superfamily. Adenine deaminase family. The cofactor is Mn(2+).

The enzyme catalyses adenine + H2O + H(+) = hypoxanthine + NH4(+). In Thermosipho africanus (strain TCF52B), this protein is Adenine deaminase.